Consider the following 231-residue polypeptide: 7-cyano-7-deazaguanine synthase (231 aa).

8 to 18 contacts ATP; that stretch reads FSGGQDSTTCL. Positions 187, 196, 199, and 202 each coordinate Zn(2+).

It belongs to the QueC family. Zn(2+) is required as a cofactor.

It catalyses the reaction 7-carboxy-7-deazaguanine + NH4(+) + ATP = 7-cyano-7-deazaguanine + ADP + phosphate + H2O + H(+). Its pathway is purine metabolism; 7-cyano-7-deazaguanine biosynthesis. In terms of biological role, catalyzes the ATP-dependent conversion of 7-carboxy-7-deazaguanine (CDG) to 7-cyano-7-deazaguanine (preQ(0)). The chain is 7-cyano-7-deazaguanine synthase from Vibrio vulnificus (strain CMCP6).